The chain runs to 338 residues: Lipoate-protein ligase A (338 aa).

The BPL/LPL catalytic domain maps to 29–216 (PATQRVLFLW…AFFAHYGERI (188 aa)). Residues R71, 76–79 (GAVF), and K134 contribute to the ATP site. K134 provides a ligand contact to (R)-lipoate.

The protein belongs to the LplA family. As to quaternary structure, monomer.

Its subcellular location is the cytoplasm. The catalysed reaction is L-lysyl-[lipoyl-carrier protein] + (R)-lipoate + ATP = N(6)-[(R)-lipoyl]-L-lysyl-[lipoyl-carrier protein] + AMP + diphosphate + H(+). Its pathway is protein modification; protein lipoylation via exogenous pathway; protein N(6)-(lipoyl)lysine from lipoate: step 1/2. It functions in the pathway protein modification; protein lipoylation via exogenous pathway; protein N(6)-(lipoyl)lysine from lipoate: step 2/2. Functionally, catalyzes both the ATP-dependent activation of exogenously supplied lipoate to lipoyl-AMP and the transfer of the activated lipoyl onto the lipoyl domains of lipoate-dependent enzymes. The chain is Lipoate-protein ligase A from Salmonella typhi.